Consider the following 689-residue polypeptide: Protein asunder (689 aa).

The stretch at 521–550 forms a coiled coil; sequence NGARLKLSKAKDQYRLLYRELEQLIQLNAT. 2 disordered regions span residues 591–619 and 665–689; these read SPER…SKRR and GTKD…SVRS. Residues 599 to 614 are compositionally biased toward low complexity; it reads SSVGASGSSNSNSLLK. The short motif at 613 to 619 is the Nuclear localization signal (NLS) element; that stretch reads LKASKRR.

The protein belongs to the Integrator subunit 13 family. As to quaternary structure, belongs to the multiprotein complex Integrator, at least composed of IntS1, IntS2, IntS3, IntS4, omd/IntS5, IntS6, defl/IntS7, IntS8, IntS9, IntS10, IntS11, IntS12, asun/IntS13, IntS14 and IntS15. The core complex associates with protein phosphatase 2A subunits mts/PP2A and Pp2A-29B, to form the Integrator-PP2A (INTAC) complex. Post-translationally, phosphorylated.

Its subcellular location is the nucleus. It is found in the cytoplasm. The protein resides in the perinuclear region. Functionally, component of the integrator complex, a multiprotein complex that terminates RNA polymerase II (Pol II) transcription in the promoter-proximal region of genes. The integrator complex provides a quality checkpoint during transcription elongation by driving premature transcription termination of transcripts that are unfavorably configured for transcriptional elongation: the complex terminates transcription by (1) catalyzing dephosphorylation of the C-terminal domain (CTD) of Pol II subunit Polr2A/Rbp1 and Spt5, and (2) degrading the exiting nascent RNA transcript via endonuclease activity. The integrator complex is also involved in the 3'-end processing of the U7 snRNA, and also the spliceosomal snRNAs U1, U2, U4 and U5. The sequence is that of Protein asunder (asun) from Drosophila sechellia (Fruit fly).